The chain runs to 145 residues: Bacilliredoxin SERP1075 (145 aa).

The protein belongs to the bacilliredoxin family.

The chain is Bacilliredoxin SERP1075 from Staphylococcus epidermidis (strain ATCC 35984 / DSM 28319 / BCRC 17069 / CCUG 31568 / BM 3577 / RP62A).